The following is a 366-amino-acid chain: Galactoside alpha-(1,2)-fucosyltransferase 1 (366 aa).

Over 1–8 (MWPLSHRH) the chain is Cytoplasmic. Residues 9-25 (LCLAFLLVCVLSAISFF) traverse the membrane as a helical; Signal-anchor for type II membrane protein segment. Residues 26–366 (LHIHQDSFPH…LSPLWTLAEP (341 aa)) are Lumenal-facing. 3 N-linked (GlcNAc...) asparagine glycosylation sites follow: Asn-66, Asn-302, and Asn-328.

This sequence belongs to the glycosyltransferase 11 family.

The protein resides in the golgi apparatus. It localises to the golgi stack membrane. The catalysed reaction is a beta-D-galactosyl-(1-&gt;4)-N-acetyl-beta-D-glucosaminyl derivative + GDP-beta-L-fucose = an alpha-L-Fuc-(1-&gt;2)-beta-D-Gal-(1-&gt;4)-beta-D-GlcNAc derivative + GDP + H(+). It carries out the reaction a ganglioside GA1 + GDP-beta-L-fucose = a ganglioside Fuc-GA1 + GDP + H(+). The enzyme catalyses a beta-D-Gal-(1-&gt;3)-beta-D-GlcNAc-(1-&gt;3)-beta-D-Gal-(1-&gt;4)-beta-D-Glc-(1&lt;-&gt;1')-Cer(d18:1(4E)) + GDP-beta-L-fucose = alpha-L-fucosyl-(1-&gt;2)- beta-D-galactosyl-(1-&gt;3)-N-acetyl-beta-D-glucosaminyl-(1-&gt;3)-beta-D-galactosyl-(1-&gt;4)-beta-D-glucosyl-(1&lt;-&gt;1')-N-acylsphing-4-enine + GDP + H(+). It catalyses the reaction a neolactoside nLc4Cer(d18:1(4E)) + GDP-beta-L-fucose = a neolactoside IV(2)-alpha-Fuc-nLc4Cer(d18:1(4E)) + GDP + H(+). The catalysed reaction is a ganglioside GM1 + GDP-beta-L-fucose = a ganglioside Fuc-GM1 + GDP + H(+). It carries out the reaction beta-D-galactosyl-(1-&gt;3)-N-acetyl-D-galactosamine + GDP-beta-L-fucose = alpha-L-fucosyl-(1-&gt;2)-beta-D-galactosyl-(1-&gt;3)-N-acetyl-D-galactosamine + GDP + H(+). It functions in the pathway protein modification; protein glycosylation. Its function is as follows. Catalyzes the transfer of L-fucose, from a guanosine diphosphate-beta-L-fucose, to the terminal galactose residue of glycoconjugates through an alpha(1,2) linkage leading to H antigen synthesis that is an intermediate substrate in the synthesis of ABO blood group antigens. H antigen is essential for maturation of the glomerular layer of the main olfactory bulb, in cell migration and early cell-cell contacts during tumor associated angiogenesis. Preferentially fucosylates soluble lactose and to a lesser extent fucosylates glycolipids gangliosides GA1 and GM1a. The polypeptide is Galactoside alpha-(1,2)-fucosyltransferase 1 (Lagothrix lagotricha (Brown woolly monkey)).